We begin with the raw amino-acid sequence, 479 residues long: Protein nucleotidyltransferase YdiU (479 aa).

ATP is bound by residues glycine 83, glycine 85, arginine 86, lysine 106, aspartate 118, glycine 119, arginine 169, and arginine 176. Aspartate 245 functions as the Proton acceptor in the catalytic mechanism. Positions 246 and 255 each coordinate Mg(2+). Aspartate 255 contributes to the ATP binding site.

Belongs to the SELO family. Mg(2+) serves as cofactor. The cofactor is Mn(2+).

The catalysed reaction is L-seryl-[protein] + ATP = 3-O-(5'-adenylyl)-L-seryl-[protein] + diphosphate. It carries out the reaction L-threonyl-[protein] + ATP = 3-O-(5'-adenylyl)-L-threonyl-[protein] + diphosphate. It catalyses the reaction L-tyrosyl-[protein] + ATP = O-(5'-adenylyl)-L-tyrosyl-[protein] + diphosphate. The enzyme catalyses L-histidyl-[protein] + UTP = N(tele)-(5'-uridylyl)-L-histidyl-[protein] + diphosphate. The catalysed reaction is L-seryl-[protein] + UTP = O-(5'-uridylyl)-L-seryl-[protein] + diphosphate. It carries out the reaction L-tyrosyl-[protein] + UTP = O-(5'-uridylyl)-L-tyrosyl-[protein] + diphosphate. In terms of biological role, nucleotidyltransferase involved in the post-translational modification of proteins. It can catalyze the addition of adenosine monophosphate (AMP) or uridine monophosphate (UMP) to a protein, resulting in modifications known as AMPylation and UMPylation. This chain is Protein nucleotidyltransferase YdiU, found in Erwinia tasmaniensis (strain DSM 17950 / CFBP 7177 / CIP 109463 / NCPPB 4357 / Et1/99).